The sequence spans 354 residues: Elongation factor Ts (354 aa).

The interval 81–84 is involved in Mg(2+) ion dislocation from EF-Tu; that stretch reads TDFV.

It belongs to the EF-Ts family.

Its subcellular location is the cytoplasm. In terms of biological role, associates with the EF-Tu.GDP complex and induces the exchange of GDP to GTP. It remains bound to the aminoacyl-tRNA.EF-Tu.GTP complex up to the GTP hydrolysis stage on the ribosome. The chain is Elongation factor Ts from Campylobacter concisus (strain 13826).